We begin with the raw amino-acid sequence, 501 residues long: Glycerol kinase (501 aa).

An ADP-binding site is contributed by Thr-14. Positions 14, 15, and 16 each coordinate ATP. Thr-14 provides a ligand contact to sn-glycerol 3-phosphate. Arg-18 serves as a coordination point for ADP. Sn-glycerol 3-phosphate contacts are provided by Arg-84, Glu-85, and Tyr-136. Glycerol-binding residues include Arg-84, Glu-85, and Tyr-136. The residue at position 231 (His-231) is a Phosphohistidine; by HPr. Position 245 (Asp-245) interacts with sn-glycerol 3-phosphate. Glycerol contacts are provided by Asp-245 and Gln-246. ADP contacts are provided by Thr-267 and Gly-310. Residues Thr-267, Gly-310, Gln-314, and Gly-411 each coordinate ATP. The ADP site is built by Gly-411 and Asn-415.

This sequence belongs to the FGGY kinase family. Homotetramer and homodimer (in equilibrium). In terms of processing, the phosphoenolpyruvate-dependent sugar phosphotransferase system (PTS), including enzyme I, and histidine-containing protein (HPr) are required for the phosphorylation of His-231, which leads to the activation of the enzyme.

It catalyses the reaction glycerol + ATP = sn-glycerol 3-phosphate + ADP + H(+). It participates in polyol metabolism; glycerol degradation via glycerol kinase pathway; sn-glycerol 3-phosphate from glycerol: step 1/1. Activated by phosphorylation and inhibited by fructose 1,6-bisphosphate (FBP). Functionally, key enzyme in the regulation of glycerol uptake and metabolism. Catalyzes the phosphorylation of glycerol to yield sn-glycerol 3-phosphate. This chain is Glycerol kinase, found in Enterococcus faecalis (strain ATCC 700802 / V583).